A 916-amino-acid polypeptide reads, in one-letter code: Translation initiation factor IF-2 (916 aa).

The segment at 58-317 (LEAEGHLPGA…GVTVPRGDGG (260 aa)) is disordered. Residues 120 to 142 (EKVAASEAADAKPAAGAPADTAK) show a composition bias toward low complexity. The segment covering 195–206 (SNIPRPAPPRPG) has biased composition (pro residues). 2 stretches are compositionally biased toward gly residues: residues 214 to 227 (RPGGGQRQGGGGRP) and 235 to 282 (SAGG…GRGG). Over residues 283–294 (GKSKARKSKRAK) the composition is skewed to basic residues. The tr-type G domain occupies 409–583 (IRPPVVTVMG…LTADAGLDLR (175 aa)). Positions 418 to 425 (GHVDHGKT) are G1. Residue 418-425 (GHVDHGKT) participates in GTP binding. Positions 443–447 (GITQH) are G2. Residues 468-471 (DTPG) form a G3 region. GTP is bound by residues 468 to 472 (DTPGH) and 522 to 525 (NKVD). Residues 522 to 525 (NKVD) form a G4 region. Residues 558 to 560 (SAR) are G5.

The protein belongs to the TRAFAC class translation factor GTPase superfamily. Classic translation factor GTPase family. IF-2 subfamily.

The protein resides in the cytoplasm. Functionally, one of the essential components for the initiation of protein synthesis. Protects formylmethionyl-tRNA from spontaneous hydrolysis and promotes its binding to the 30S ribosomal subunits. Also involved in the hydrolysis of GTP during the formation of the 70S ribosomal complex. The polypeptide is Translation initiation factor IF-2 (Leifsonia xyli subsp. xyli (strain CTCB07)).